A 760-amino-acid polypeptide reads, in one-letter code: Prolyl endopeptidase (760 aa).

Active-site charge relay system residues include Ser-609, Asp-693, and His-730.

It belongs to the peptidase S9A family.

It localises to the cytoplasm. The enzyme catalyses Hydrolysis of Pro-|-Xaa &gt;&gt; Ala-|-Xaa in oligopeptides.. Inhibited by chymostatin, Boc-Glu(NHO-Bz)-Pyrrolidide, Z-Pro-L-prolinal dimethyacetal and the peptide H-H-L-P-P-P-V-OH. In terms of biological role, cleaves peptide bonds on the C-terminal side of prolyl residues within peptides that are up to approximately 30 amino acids long. The chain is Prolyl endopeptidase (prep) from Dictyostelium discoideum (Social amoeba).